The following is a 497-amino-acid chain: L-arabinose isomerase (497 aa).

The Mn(2+) site is built by Glu-306, Glu-333, His-349, and His-448.

Belongs to the arabinose isomerase family. Mn(2+) serves as cofactor.

The catalysed reaction is beta-L-arabinopyranose = L-ribulose. The protein operates within carbohydrate degradation; L-arabinose degradation via L-ribulose; D-xylulose 5-phosphate from L-arabinose (bacterial route): step 1/3. Its function is as follows. Catalyzes the conversion of L-arabinose to L-ribulose. This Vibrio parahaemolyticus serotype O3:K6 (strain RIMD 2210633) protein is L-arabinose isomerase.